The following is a 234-amino-acid chain: Large ribosomal subunit protein uL1 (234 aa).

It belongs to the universal ribosomal protein uL1 family. Part of the 50S ribosomal subunit.

In terms of biological role, binds directly to 23S rRNA. The L1 stalk is quite mobile in the ribosome, and is involved in E site tRNA release. Protein L1 is also a translational repressor protein, it controls the translation of the L11 operon by binding to its mRNA. The chain is Large ribosomal subunit protein uL1 from Anaeromyxobacter dehalogenans (strain 2CP-C).